A 315-amino-acid chain; its full sequence is Transcription repressor OFP7 (315 aa).

Residues 113 to 183 (YETPRRKIYN…ELPRVTRRPR (71 aa)) form a disordered region. The span at 130–145 (RRRLKKKEKSNSRRRG) shows a compositional bias: basic residues. Positions 160-174 (LPSSTNLSPEYSSSE) are enriched in polar residues. The OVATE domain occupies 230–289 (VVKKSEDPYEDFKGSMMEMIVEKKMFEVAELEQLLSCFLSLNAKRHHRAIVRAFSEIWVA).

Expressed in roots, shoots, stems, flower buds and siliques.

It localises to the nucleus. Transcriptional repressor that regulates multiple aspects of plant growth and development through the regulation of BEL1-LIKE (BLH) and KNOX TALE (KNAT) homeodomain transcription factors. This Arabidopsis thaliana (Mouse-ear cress) protein is Transcription repressor OFP7 (OFP7).